We begin with the raw amino-acid sequence, 232 residues long: Protein lin-7 homolog A (232 aa).

Residues 14 to 28 carry the Kinase interacting site motif; the sequence is MATLTVVQPLTLDRD. The 56-residue stretch at 25 to 80 folds into the L27 domain; that stretch reads LDRDVARAIELLEKLQESGEVPVHKLQSLKKVLQSEFCTAIREVYQYMHETITVNG. The PDZ domain maps to 108–190; the sequence is VVELPKTDEG…SVKLVVRYTP (83 aa).

Belongs to the lin-7 family. In terms of assembly, forms a complex with CASK and CASKIN1. Component of the brain-specific heterotrimeric complex (LIN-10-LIN-2-LIN-7 complex) composed of at least APBA1, CASK, and LIN7, which associates with the motor protein KIF17 to transport vesicles along microtubules. Can also interact with other modular proteins containing protein-protein interaction domains like PALS1, PALS2, MPP7, DLG1, DLG2 and DLG3 through its L27 domain. Interacts with DLG4 and GRIN2B as well as CDH1 and CTNNB1, the channels KCNJ12/Kir2.2, KCNJ4/Kir2.3 and probably KCNJ2/Kir2.1 and SLC6A12/BGT-1 via its PDZ domain. The association of LIN7A with cadherin and beta-catenin is calcium-dependent, occurs at synaptic junctions and requires the actin cytoskeleton. Interacts with EGFR, ERBB2, ERBB3 and ERBB4 with both PDZ and KID domains. Associates with KIF17 via APBA1. Interacts with HTR4. Forms a tripartite complex composed of DLG1, MPP7 and LIN7 (LIN7A or LIN7C). Interacts with MARCHF11. Ubiquitously expressed in brain and detected in lung, liver and testis (at protein level). Expression was detected only in brain.

It localises to the cell membrane. The protein resides in the basolateral cell membrane. Its subcellular location is the cell junction. It is found in the postsynaptic density membrane. The protein localises to the tight junction. Plays a role in establishing and maintaining the asymmetric distribution of channels and receptors at the plasma membrane of polarized cells. Forms membrane-associated multiprotein complexes that may regulate delivery and recycling of proteins to the correct membrane domains. The tripartite complex composed of LIN7 (LIN7A, LIN7B or LIN7C), CASK and APBA1 associates with the motor protein KIF17 to transport vesicles containing N-methyl-D-aspartate (NMDA) receptor subunit NR2B along microtubules. This complex may have the potential to couple synaptic vesicle exocytosis to cell adhesion in brain. Ensures the proper localization of GRIN2B (subunit 2B of the NMDA receptor) to neuronal postsynaptic density and may function in localizing synaptic vesicles at synapses where it is recruited by beta-catenin and cadherin. Required to localize Kir2 channels, GABA transporter (SLC6A12) and EGFR/ERBB1, ERBB2, ERBB3 and ERBB4 to the basolateral membrane of epithelial cells. The polypeptide is Protein lin-7 homolog A (Lin7a) (Rattus norvegicus (Rat)).